The following is a 151-amino-acid chain: Large ribosomal subunit protein bL9 (151 aa).

It belongs to the bacterial ribosomal protein bL9 family.

Binds to the 23S rRNA. The chain is Large ribosomal subunit protein bL9 from Azoarcus sp. (strain BH72).